Here is a 360-residue protein sequence, read N- to C-terminus: Phosphate acyltransferase (360 aa).

This sequence belongs to the PlsX family. In terms of assembly, homodimer. Probably interacts with PlsY.

It is found in the cytoplasm. The catalysed reaction is a fatty acyl-[ACP] + phosphate = an acyl phosphate + holo-[ACP]. Its pathway is lipid metabolism; phospholipid metabolism. Its function is as follows. Catalyzes the reversible formation of acyl-phosphate (acyl-PO(4)) from acyl-[acyl-carrier-protein] (acyl-ACP). This enzyme utilizes acyl-ACP as fatty acyl donor, but not acyl-CoA. This is Phosphate acyltransferase from Caulobacter vibrioides (strain ATCC 19089 / CIP 103742 / CB 15) (Caulobacter crescentus).